Consider the following 250-residue polypeptide: Pyrroloquinoline-quinone synthase (250 aa).

This sequence belongs to the PqqC family.

It catalyses the reaction 6-(2-amino-2-carboxyethyl)-7,8-dioxo-1,2,3,4,7,8-hexahydroquinoline-2,4-dicarboxylate + 3 O2 = pyrroloquinoline quinone + 2 H2O2 + 2 H2O + H(+). It functions in the pathway cofactor biosynthesis; pyrroloquinoline quinone biosynthesis. Its function is as follows. Ring cyclization and eight-electron oxidation of 3a-(2-amino-2-carboxyethyl)-4,5-dioxo-4,5,6,7,8,9-hexahydroquinoline-7,9-dicarboxylic-acid to PQQ. The protein is Pyrroloquinoline-quinone synthase of Xanthomonas campestris pv. campestris (strain B100).